The chain runs to 137 residues: Large ribosomal subunit protein uL16 (137 aa).

A compositionally biased stretch (basic residues) spans 1–17 (MLQPKRTKFRKQQKGRN). A disordered region spans residues 1–21 (MLQPKRTKFRKQQKGRNRGQA).

The protein belongs to the universal ribosomal protein uL16 family. Part of the 50S ribosomal subunit.

Functionally, binds 23S rRNA and is also seen to make contacts with the A and possibly P site tRNAs. This chain is Large ribosomal subunit protein uL16, found in Nitrosococcus oceani (strain ATCC 19707 / BCRC 17464 / JCM 30415 / NCIMB 11848 / C-107).